The primary structure comprises 365 residues: tRNA N6-adenosine threonylcarbamoyltransferase (365 aa).

Residues His-119 and His-123 each coordinate Fe cation. Residues 141–145 (LVSGG), Asp-174, Gly-187, and Asn-288 contribute to the substrate site. A Fe cation-binding site is contributed by Asp-316.

This sequence belongs to the KAE1 / TsaD family. Fe(2+) is required as a cofactor.

Its subcellular location is the cytoplasm. The catalysed reaction is L-threonylcarbamoyladenylate + adenosine(37) in tRNA = N(6)-L-threonylcarbamoyladenosine(37) in tRNA + AMP + H(+). Required for the formation of a threonylcarbamoyl group on adenosine at position 37 (t(6)A37) in tRNAs that read codons beginning with adenine. Is involved in the transfer of the threonylcarbamoyl moiety of threonylcarbamoyl-AMP (TC-AMP) to the N6 group of A37, together with TsaE and TsaB. TsaD likely plays a direct catalytic role in this reaction. In Rhizobium etli (strain CIAT 652), this protein is tRNA N6-adenosine threonylcarbamoyltransferase.